A 365-amino-acid polypeptide reads, in one-letter code: 3-dehydroquinate synthase (365 aa).

NAD(+) is bound by residues Asp69–Lys74, Gly103–Asp107, Thr127–Thr128, Lys140, Lys149, and Thr167–Thr170. Residues Glu182, His245, and His262 each contribute to the Zn(2+) site.

This sequence belongs to the sugar phosphate cyclases superfamily. Dehydroquinate synthase family. Co(2+) serves as cofactor. Zn(2+) is required as a cofactor. Requires NAD(+) as cofactor.

The protein resides in the cytoplasm. The enzyme catalyses 7-phospho-2-dehydro-3-deoxy-D-arabino-heptonate = 3-dehydroquinate + phosphate. The protein operates within metabolic intermediate biosynthesis; chorismate biosynthesis; chorismate from D-erythrose 4-phosphate and phosphoenolpyruvate: step 2/7. In terms of biological role, catalyzes the conversion of 3-deoxy-D-arabino-heptulosonate 7-phosphate (DAHP) to dehydroquinate (DHQ). This chain is 3-dehydroquinate synthase, found in Pseudomonas putida (strain W619).